The chain runs to 319 residues: Probable cytochrome c oxidase subunit 2 (319 aa).

The N-terminal stretch at 1-33 (MSPNGSDRSPRRPMRRKLLQALTAGLVLATATG) is a signal peptide. The next 2 helical transmembrane spans lie at 63–83 (WAAA…SVFF) and 101–121 (LPIE…LFYF). Residues His227, Cys262, Cys266, and His270 each contribute to the Cu cation site.

This sequence belongs to the cytochrome c oxidase subunit 2 family. Requires Cu cation as cofactor. It depends on heme as a cofactor.

The protein resides in the cell membrane. It carries out the reaction 4 Fe(II)-[cytochrome c] + O2 + 8 H(+)(in) = 4 Fe(III)-[cytochrome c] + 2 H2O + 4 H(+)(out). Its function is as follows. Subunits I and II form the functional core of the enzyme complex. Electrons originating in cytochrome c are transferred via heme a and Cu(A) to the binuclear center formed by heme a3 and Cu(B). The polypeptide is Probable cytochrome c oxidase subunit 2 (ctaC) (Streptomyces coelicolor (strain ATCC BAA-471 / A3(2) / M145)).